The chain runs to 1171 residues: Protein WWC2 (1171 aa).

WW domains are found at residues 9–42 (LPLP…DPRD) and 56–89 (NELP…DPRK). Coiled coils occupy residues 120 to 193 (KEQR…YKEQ), 223 to 257 (ELKS…LEEA), and 301 to 420 (LAEK…KSAT). Disordered stretches follow at residues 521 to 552 (SPTA…LSPP) and 603 to 637 (QALA…KNPD). Residues 534-551 (PKSVTSLSSLSSLSSLSP) are compositionally biased toward low complexity. 2 stretches are compositionally biased toward basic and acidic residues: residues 606–616 (AERKSTGEGLR) and 625–637 (GRTD…KNPD). A C2 domain is found at 684–806 (GAAQAQLILR…FSNDVHTQWY (123 aa)). 2 coiled-coil regions span residues 836 to 870 (LDLD…EQLC) and 1047 to 1123 (DLEL…NAEK).

This sequence belongs to the WWC family.

The protein resides in the cytoplasm. Its subcellular location is the cytosol. Functionally, negative regulator of the Hippo signaling pathway, also known as the Salvador-Warts-Hippo (SWH) pathway. The protein is Protein WWC2 (wwc2) of Xenopus tropicalis (Western clawed frog).